The following is a 464-amino-acid chain: Phospho-cellobiase (464 aa).

Glu172 (proton donor) is an active-site residue. Residue Glu361 is the Nucleophile of the active site.

Belongs to the glycosyl hydrolase 1 family.

This is Phospho-cellobiase (casB) from Klebsiella oxytoca.